A 356-amino-acid polypeptide reads, in one-letter code: S-adenosylmethionine:tRNA ribosyltransferase-isomerase (356 aa).

Belongs to the QueA family. As to quaternary structure, monomer.

The protein localises to the cytoplasm. It catalyses the reaction 7-aminomethyl-7-carbaguanosine(34) in tRNA + S-adenosyl-L-methionine = epoxyqueuosine(34) in tRNA + adenine + L-methionine + 2 H(+). Its pathway is tRNA modification; tRNA-queuosine biosynthesis. Its function is as follows. Transfers and isomerizes the ribose moiety from AdoMet to the 7-aminomethyl group of 7-deazaguanine (preQ1-tRNA) to give epoxyqueuosine (oQ-tRNA). In Yersinia pestis, this protein is S-adenosylmethionine:tRNA ribosyltransferase-isomerase.